The primary structure comprises 464 residues: Gamma-aminobutyric acid receptor subunit rho-3 (464 aa).

The signal sequence occupies residues 1–15 (MVLAFWLAFFTYTWI). The Extracellular portion of the chain corresponds to 16–263 (TLMLDASAVK…LFINFVLRRH (248 aa)). Arg108 contributes to the 4-aminobutanoate binding site. N-linked (GlcNAc...) asparagine glycosylation occurs at Asn123. 4-aminobutanoate is bound at residue Ser172. The cysteines at positions 181 and 195 are disulfide-linked. A glycan (N-linked (GlcNAc...) asparagine) is linked at Asn194. Glu200 provides a ligand contact to 4-aminobutanoate. A helical transmembrane segment spans residues 264–284 (IFFFVLQTYFPAMLMVMLSWV). Residues 285-296 (SFWIDRRAVPAR) are Cytoplasmic-facing. A helical transmembrane segment spans residues 297–317 (VSLGITTVLTMSTIVTGVSAS). Topologically, residues 318 to 328 (MPQVSYVKAVD) are extracellular. A helical membrane pass occupies residues 329–349 (VYMWVSSLFVFLSVIEYAAVN). The segment at 344–445 (EYAAVNYLTT…NNHVIDTYSR (102 aa)) is interaction with SQSTM1. At 350–443 (YLTTVEEWKQ…LENNHVIDTY (94 aa)) the chain is on the cytoplasmic side. The helical transmembrane segment at 444–464 (SRIVFPVVYIIFNLFYWGIYV) threads the bilayer.

Belongs to the ligand-gated ion channel (TC 1.A.9) family. Gamma-aminobutyric acid receptor (TC 1.A.9.5) subfamily. GABRR3 sub-subfamily. As to quaternary structure, three rho subunits (rho-1/GBRR1, rho-2/GBRR2 and rho-3/GBRR3) coassemble either to form functional homopentamers or heteropentamers. Forms a ternary complex with SQSTM1 and PRKCZ. Expressed in retina.

The protein localises to the postsynaptic cell membrane. It localises to the cell membrane. It carries out the reaction chloride(in) = chloride(out). Activated by agonists in the following the potency order: muscimol &gt; TACP &gt; TACA &gt; thiomuscimol &gt; CAMP &gt; CACA, when forming a homopentamer. Inhibited by TPMPA, a rho-specific antagonist, when forming a homopentamer. Inhibited antagonists in the following the potency order: TAMP = TPMPA &gt; P4MPA = THIP &gt; 14AA &gt; 3-APA, when forming a homopentamer. Functionally, rho subunit of the pentameric ligand-gated chloride channels responsible for mediating the effects of gamma-aminobutyric acid (GABA), the major inhibitory neurotransmitter in the brain. Rho-containing GABA-gated chloride channels are a subclass of GABA(A) receptors (GABAARs) entirely composed of rho subunits, where GABA molecules bind at the rho intersubunit interfaces. When activated by GABA, rho-GABAARs selectively allow the flow of chloride anions across the cell membrane down their electrochemical gradient. The sequence is that of Gamma-aminobutyric acid receptor subunit rho-3 from Rattus norvegicus (Rat).